The primary structure comprises 558 residues: Cytochrome c oxidase subunit 1-beta (558 aa).

Residues methionine 1–histidine 28 lie on the Cytoplasmic side of the membrane. The chain crosses the membrane as a helical span at residues lysine 29 to histidine 59. At proline 60 to proline 82 the chain is on the periplasmic side. Cysteine 66 and cysteine 80 are disulfide-bonded. A helical transmembrane segment spans residues asparagine 83–isoleucine 120. Residue histidine 94 participates in Fe(II)-heme a binding. Residues glycine 121–alanine 126 lie on the Cytoplasmic side of the membrane. Residues phenylalanine 127–alanine 151 traverse the membrane as a helical segment. Topologically, residues proline 152–glycine 176 are periplasmic. A helical membrane pass occupies residues tyrosine 177–asparagine 206. Residues methionine 207–valine 217 lie on the Cytoplasmic side of the membrane. Residues proline 218–phenylalanine 251 traverse the membrane as a helical segment. Residues glycine 252–glycine 262 are Periplasmic-facing. The helical transmembrane segment at aspartate 263 to lysine 299 threads the bilayer. Residues histidine 276 and tyrosine 280 each contribute to the Cu cation site. A cross-link (1'-histidyl-3'-tyrosine (His-Tyr)) is located at residues histidine 276–tyrosine 280. The Cytoplasmic portion of the chain corresponds to lysine 300–phenylalanine 303. A helical membrane pass occupies residues glycine 304–glycine 331. Residues histidine 325 and histidine 326 each coordinate Cu cation. Methionine 332 is a topological domain (periplasmic). The helical transmembrane segment at serine 333–glycine 364 threads the bilayer. The Cytoplasmic segment spans residues glycine 365 to phenylalanine 369. The helical transmembrane segment at lysine 370 to glutamine 395 threads the bilayer. The Periplasmic segment spans residues alanine 396 to aspartate 404. A helical transmembrane segment spans residues threonine 405–glycine 437. Heme a3 is bound at residue histidine 411. A Fe(II)-heme a-binding site is contributed by histidine 413. At arginine 438–tyrosine 440 the chain is on the cytoplasmic side. Residues proline 441–glutamine 469 traverse the membrane as a helical segment. The Periplasmic portion of the chain corresponds to glycine 470–tyrosine 478. Residues proline 479–glycine 514 traverse the membrane as a helical segment. The Cytoplasmic segment spans residues lysine 515 to histidine 558.

Belongs to the heme-copper respiratory oxidase family. It depends on Cu(2+) as a cofactor. Heme serves as cofactor. Post-translationally, his-276 and Tyr-280 are involved in the formation of a copper-coordinated covalent cross-link at the active site of the catalytic subunit I.

The protein localises to the cell inner membrane. The catalysed reaction is 4 Fe(II)-[cytochrome c] + O2 + 8 H(+)(in) = 4 Fe(III)-[cytochrome c] + 2 H2O + 4 H(+)(out). Its pathway is energy metabolism; oxidative phosphorylation. Subunit I and II form the functional core of the enzyme complex. Electrons originating in cytochrome c are transferred via heme a and Cu(A) to the binuclear center formed by heme a3 and Cu(B). This cytochrome c oxidase shows proton pump activity across the membrane in addition to the electron transfer. This Paracoccus denitrificans protein is Cytochrome c oxidase subunit 1-beta (ctaDII).